Reading from the N-terminus, the 206-residue chain is uncharacterized protein (206 aa).

The helical transmembrane segment at 166–186 (FYTGLSVIVGGATALALGLFF) threads the bilayer.

It localises to the membrane. This is an uncharacterized protein from Dictyostelium discoideum (Social amoeba).